The following is a 476-amino-acid chain: NADH-quinone oxidoreductase subunit N (476 aa).

Transmembrane regions (helical) follow at residues 5–25 (LALIWPELILTIGGLITLMLG), 38–58 (LSALLTLAAAAAAAIALFGVE), 70–90 (AFGGFAKLLIYAASFICILVA), 97–117 (GMRAEYPTLILFAALGMGIMA), 122–142 (LMTLYVGLELNSLAAYVLASF), 157–177 (FVLGALASGMLLYGISLLYGF), 196–218 (IGLIFGIVFVLSGLGFKISAVPF), 231–253 (TPVTTFFASAPKVAAMALMARIV), 264–284 (WQQIVIFLALASIILGAVGAI), 292–312 (LLAYSSINNVGFMLIGLAAGT), 318–338 (GVLTYLLVYLVTTLGAFLVVL), 364–384 (LAAAMSVFLFSLAGIPPLFGF), 401–421 (PLAVAGIVASVIGAFYYIAII), and 445–465 (IVAASALWLLAVGYLFIPALA).

The protein belongs to the complex I subunit 2 family. As to quaternary structure, NDH-1 is composed of 14 different subunits. Subunits NuoA, H, J, K, L, M, N constitute the membrane sector of the complex.

The protein localises to the cell inner membrane. The enzyme catalyses a quinone + NADH + 5 H(+)(in) = a quinol + NAD(+) + 4 H(+)(out). NDH-1 shuttles electrons from NADH, via FMN and iron-sulfur (Fe-S) centers, to quinones in the respiratory chain. The immediate electron acceptor for the enzyme in this species is believed to be ubiquinone. Couples the redox reaction to proton translocation (for every two electrons transferred, four hydrogen ions are translocated across the cytoplasmic membrane), and thus conserves the redox energy in a proton gradient. This is NADH-quinone oxidoreductase subunit N from Sphingopyxis alaskensis (strain DSM 13593 / LMG 18877 / RB2256) (Sphingomonas alaskensis).